A 60-amino-acid chain; its full sequence is UPF0434 protein KPK_3615 (60 aa).

Belongs to the UPF0434 family.

The polypeptide is UPF0434 protein KPK_3615 (Klebsiella pneumoniae (strain 342)).